Consider the following 621-residue polypeptide: Chaperone protein HtpG (621 aa).

The a; substrate-binding stretch occupies residues 1-328 (MIQEKKKFDA…SEDLPLNISR (328 aa)). The interval 329 to 544 (ESLQHNSVLE…DAAMDIRMER (216 aa)) is b. The segment at 475-494 (SDIDVEQTTSQSEAKNTDSK) is disordered. The interval 545–621 (FLIEQKQIAN…LNDIVQKAIL (77 aa)) is c.

Belongs to the heat shock protein 90 family. In terms of assembly, homodimer.

It localises to the cytoplasm. Molecular chaperone. Has ATPase activity. The protein is Chaperone protein HtpG of Rickettsia rickettsii (strain Iowa).